Here is a 444-residue protein sequence, read N- to C-terminus: E1B 55 kDa protein (444 aa).

The interval 1 to 42 (MEQDSDLESGRATNQRPPRVRVRGAGVRGRGRVRRRALSEGQ) is disordered. 2 positions are modified to phosphoserine: Ser438 and Ser439.

The protein belongs to the adenoviridae E1B 55 kDa protein family. Interacts with host PML-4 and PML-5; this interaction promotes efficient subnuclear targeting of E1B-55K to PML nuclear bodies. Interacts with E4-ORF3 protein. Interacts with E4-ORF6 protein.

It is found in the host nucleus. It localises to the host cytoplasm. Plays a major role to prevent cellular inhibition of viral genome replication. Assembles an SCF-like E3 ubiquitin ligase complex based on the cellular proteins ELOB, ELOC, CUL5 and RBX1, in cooperation with viral E4orf6. This viral RING-type ligase ubiquitinates cellular substrates and targets them to proteasomal degradation: TP53/p53, LIG4, MRE11-RAD50-NBS1 (MRN) complex, ITGA3, DAXX and BLM. E1B-55K probably acts as the substrate-specific adapter of the SCF-like E3 ubiquitin ligase complex. Degradation of host TP53/p53 activity is essential for preventing E1A-induced TP53 accumulation that would otherwise lead to cell apoptosis and growth arrest. E1B-55K also inactivates TP53 transcription-factor activity by binding its transactivation domain. E1B-55K also functions as a SUMO1 E3 ligase for TP53 which causes the latter to be sequestered in promyelocytic leukemia (PML) nuclear bodies thereby contributing to maximal inhibition of TP53 function. The sequence is that of E1B 55 kDa protein from Canis lupus familiaris (Dog).